The sequence spans 126 residues: MQLNMLKGKLHQARVTQTELEYEGSCAIDLDLLEAVGIHEYEQIHVYNIENGERFVTYAIIGERGSRMISMNGAAAHKCNEGDRVIICAYAGVPESELGEFQPRLAYLDADNRITQRRGSIPLQVA.

The active-site Schiff-base intermediate with substrate; via pyruvic acid is serine 25. Serine 25 carries the post-translational modification Pyruvic acid (Ser). A substrate-binding site is contributed by threonine 57. Tyrosine 58 functions as the Proton donor in the catalytic mechanism. A substrate-binding site is contributed by 73-75; it reads GAA.

The protein belongs to the PanD family. As to quaternary structure, heterooctamer of four alpha and four beta subunits. Pyruvate serves as cofactor. In terms of processing, is synthesized initially as an inactive proenzyme, which is activated by self-cleavage at a specific serine bond to produce a beta-subunit with a hydroxyl group at its C-terminus and an alpha-subunit with a pyruvoyl group at its N-terminus.

It localises to the cytoplasm. The enzyme catalyses L-aspartate + H(+) = beta-alanine + CO2. It functions in the pathway cofactor biosynthesis; (R)-pantothenate biosynthesis; beta-alanine from L-aspartate: step 1/1. Functionally, catalyzes the pyruvoyl-dependent decarboxylation of aspartate to produce beta-alanine. In Halorhodospira halophila (strain DSM 244 / SL1) (Ectothiorhodospira halophila (strain DSM 244 / SL1)), this protein is Aspartate 1-decarboxylase.